Reading from the N-terminus, the 102-residue chain is Large ribosomal subunit protein bL21 (102 aa).

It belongs to the bacterial ribosomal protein bL21 family. In terms of assembly, part of the 50S ribosomal subunit. Contacts protein L20.

In terms of biological role, this protein binds to 23S rRNA in the presence of protein L20. This Sorangium cellulosum (strain So ce56) (Polyangium cellulosum (strain So ce56)) protein is Large ribosomal subunit protein bL21.